The following is a 66-amino-acid chain: ATP synthase F(0) complex subunit 8 (66 aa).

The chain crosses the membrane as a helical span at residues 8–24 (TWLTMILSMFLVLFIIF). Lys54 carries the post-translational modification N6-acetyllysine; alternate. Lys54 carries the N6-succinyllysine; alternate modification. Lys57 carries the N6-acetyllysine modification.

It belongs to the ATPase protein 8 family. In terms of assembly, component of the ATP synthase complex composed at least of ATP5F1A/subunit alpha, ATP5F1B/subunit beta, ATP5MC1/subunit c (homooctomer), MT-ATP6/subunit a, MT-ATP8/subunit 8, ATP5ME/subunit e, ATP5MF/subunit f, ATP5MG/subunit g, ATP5MK/subunit k, ATP5MJ/subunit j, ATP5F1C/subunit gamma, ATP5F1D/subunit delta, ATP5F1E/subunit epsilon, ATP5PF/subunit F6, ATP5PB/subunit b, ATP5PD/subunit d, ATP5PO/subunit OSCP. ATP synthase complex consists of a soluble F(1) head domain (subunits alpha(3) and beta(3)) - the catalytic core - and a membrane F(0) domain - the membrane proton channel (subunits c, a, 8, e, f, g, k and j). These two domains are linked by a central stalk (subunits gamma, delta, and epsilon) rotating inside the F1 region and a stationary peripheral stalk (subunits F6, b, d, and OSCP). Interacts with PRICKLE3.

Its subcellular location is the mitochondrion membrane. Functionally, subunit 8, of the mitochondrial membrane ATP synthase complex (F(1)F(0) ATP synthase or Complex V) that produces ATP from ADP in the presence of a proton gradient across the membrane which is generated by electron transport complexes of the respiratory chain. ATP synthase complex consist of a soluble F(1) head domain - the catalytic core - and a membrane F(1) domain - the membrane proton channel. These two domains are linked by a central stalk rotating inside the F(1) region and a stationary peripheral stalk. During catalysis, ATP synthesis in the catalytic domain of F(1) is coupled via a rotary mechanism of the central stalk subunits to proton translocation. In vivo, can only synthesize ATP although its ATP hydrolase activity can be activated artificially in vitro. Part of the complex F(0) domain. The sequence is that of ATP synthase F(0) complex subunit 8 from Ovis aries (Sheep).